The chain runs to 316 residues: Very-long-chain 3-oxooacyl-coA reductase let-767 (316 aa).

NADP(+) is bound by residues 47 to 76 (ASWA…NVLL) and Asp106. Ser189 contacts substrate. Tyr202 functions as the Proton acceptor in the catalytic mechanism. Lys206 contacts NADP(+).

This sequence belongs to the short-chain dehydrogenases/reductases (SDR) family. 17-beta-HSD 3 subfamily. In terms of tissue distribution, expressed in the gut of larva and adult.

The enzyme catalyses a very-long-chain (3R)-3-hydroxyacyl-CoA + NADP(+) = a very-long-chain 3-oxoacyl-CoA + NADPH + H(+). It catalyses the reaction (omega-1)-methyl-(3R)-hydroxy-fatty acyl-CoA + NADP(+) = (omega-1)-methyl-3-oxo-fatty acyl-CoA + NADPH + H(+). The catalysed reaction is a 17beta-hydroxy steroid + NADP(+) = a 17-oxo steroid + NADPH + H(+). It participates in lipid metabolism; fatty acid biosynthesis. In terms of biological role, required for branched-chain fatty acid synthesis (such as (omega-1)-methyl-fatty acids). Catalyzes the reduction of the 3-keto-fatty acyl-CoA intermediate that is formed in each cycle of fatty acid elongation. Very long-chain fatty acids (VLCFAs) serve as precursors for ceramide and sphingolipids. Involved in hormone production as it metabolizes 4-androstendione (androst-4-ene-3,17-dione) into testosterone and estrone into estradiol (17beta-estradiol) in vitro, but the physiological steroid substrate is unknown. This is Very-long-chain 3-oxooacyl-coA reductase let-767 (let-767) from Caenorhabditis elegans.